We begin with the raw amino-acid sequence, 578 residues long: MKASRFFIGTLKEAPADAEIVSHKLMVRAGMIRRVAGGIYNYLPVGLRSIRKVEAIVREEMNRAGGIELLMPAVQPAELWQESGRWEQYGPELLRFKDRKDNDFVIGPTHEEVITDIARNQIKSYRQMPVNFYQIQTKFRDEIRPRFGVMRGREFIMKDAYSFDKDAAGLNESYRKMYDAYVRIFTRLGLEFRAVAADSGSIGGNFSHEFHVIADTGEDAIAYCPTSEFAANIEAAEALPLIAERAAPAEAMEKVATPGKAKCEAVAELLAIPLERTIKSIVLATDNEGAEPTIWLVMLRGDHDLNEIKVSKLPGLKNHRFATEQEIVEWFGTPPGYLGPVGTKKPVKVIADRTVANMSDFVVGANEVDYHIAGVNWGRDLPEPDVADVRNVKKGDPSPDGKGVIDICRGIEVGHVFQLGTKYSEAMGATFLDESGKPQPMLMGCYGVGVTRILGAAIEQNFDDKGIIWPESIAPFEVVLCPMGYDRSDMVRETADKLYAELVAAGIDVILDDRGERPGVMFADWELIGVPHRLVIGERGLKEGKIEYQGRRDAEATLLPADAAAATVAEKIRAALAR.

The protein belongs to the class-II aminoacyl-tRNA synthetase family. ProS type 1 subfamily. In terms of assembly, homodimer.

It is found in the cytoplasm. It carries out the reaction tRNA(Pro) + L-proline + ATP = L-prolyl-tRNA(Pro) + AMP + diphosphate. Its function is as follows. Catalyzes the attachment of proline to tRNA(Pro) in a two-step reaction: proline is first activated by ATP to form Pro-AMP and then transferred to the acceptor end of tRNA(Pro). As ProRS can inadvertently accommodate and process non-cognate amino acids such as alanine and cysteine, to avoid such errors it has two additional distinct editing activities against alanine. One activity is designated as 'pretransfer' editing and involves the tRNA(Pro)-independent hydrolysis of activated Ala-AMP. The other activity is designated 'posttransfer' editing and involves deacylation of mischarged Ala-tRNA(Pro). The misacylated Cys-tRNA(Pro) is not edited by ProRS. The protein is Proline--tRNA ligase of Burkholderia lata (strain ATCC 17760 / DSM 23089 / LMG 22485 / NCIMB 9086 / R18194 / 383).